The primary structure comprises 109 residues: Hainantoxin-XVIII.2 (109 aa).

A signal peptide spans Met-1–Ala-18. A propeptide spanning residues Phe-19 to Ala-46 is cleaved from the precursor. Intrachain disulfides connect Cys-47–Cys-62, Cys-55–Cys-68, Cys-59–Cys-108, and Cys-61–Cys-81.

This sequence belongs to the neurotoxin 25 family. F7 subfamily. Expressed by the venom gland.

The protein resides in the secreted. In terms of biological role, putative ion channel inhibitor. This is Hainantoxin-XVIII.2 from Cyriopagopus hainanus (Chinese bird spider).